The following is a 146-amino-acid chain: Cyanate hydratase (146 aa).

Active-site residues include Arg-87, Glu-90, and Ser-113.

This sequence belongs to the cyanase family.

The enzyme catalyses cyanate + hydrogencarbonate + 3 H(+) = NH4(+) + 2 CO2. Its function is as follows. Catalyzes the reaction of cyanate with bicarbonate to produce ammonia and carbon dioxide. The polypeptide is Cyanate hydratase (Marinomonas sp. (strain MWYL1)).